The primary structure comprises 302 residues: Urease accessory protein UreD 2 (302 aa).

Belongs to the UreD family. As to quaternary structure, ureD, UreF and UreG form a complex that acts as a GTP-hydrolysis-dependent molecular chaperone, activating the urease apoprotein by helping to assemble the nickel containing metallocenter of UreC. The UreE protein probably delivers the nickel.

It localises to the cytoplasm. In terms of biological role, required for maturation of urease via the functional incorporation of the urease nickel metallocenter. This chain is Urease accessory protein UreD 2, found in Brucella ovis (strain ATCC 25840 / 63/290 / NCTC 10512).